The chain runs to 488 residues: Probable cytosol aminopeptidase (488 aa).

Mn(2+) contacts are provided by K253 and D258. K265 is an active-site residue. Positions 276, 335, and 337 each coordinate Mn(2+). R339 is a catalytic residue.

The protein belongs to the peptidase M17 family. Mn(2+) serves as cofactor.

It localises to the cytoplasm. The enzyme catalyses Release of an N-terminal amino acid, Xaa-|-Yaa-, in which Xaa is preferably Leu, but may be other amino acids including Pro although not Arg or Lys, and Yaa may be Pro. Amino acid amides and methyl esters are also readily hydrolyzed, but rates on arylamides are exceedingly low.. It catalyses the reaction Release of an N-terminal amino acid, preferentially leucine, but not glutamic or aspartic acids.. Its function is as follows. Presumably involved in the processing and regular turnover of intracellular proteins. Catalyzes the removal of unsubstituted N-terminal amino acids from various peptides. This is Probable cytosol aminopeptidase from Dinoroseobacter shibae (strain DSM 16493 / NCIMB 14021 / DFL 12).